The primary structure comprises 3421 residues: MAQTLVPANKAGGAQADVVVIGYRNQYDSQLGEGSHVSCLRSSLSFLRLIFTHGIDFALTADSIDGVLVEGRAWTVAGSKSGEAPCMVSIVELPNKITYANSANALCCVFSRLYGDSGFYMHPGDGFQSTQIPARQFFDGVWKSRSESFALITIGAIGLAVYRHGDVAYVFDPHGHGSVTEAFVVRVLARDVYAYLTGYAATDPESDWAGALVFFVTCGPTESEPGFLISATSLLYGISETYLSDEQYVERSVATSHPGISTPPPLTDVAVGAVSEAWQYQELENGAATLDADMEGVAPAAAQVRASVIRQPTEKRVSLPKRRRPPWTPPTSSENLTTSGNTHTVAGRPSQKVRNATANVQNPTTGNGSAWAEALNDGGVDNASRPGQAVGAAGTLQNPAPGDALAMETTQASEEALRTRRVFRLSGEDEAPYDLGDAVGVLSAEINELATRAEELDVLSSTCVDSTVWVTRPHNSPDMDILEQFITMIFNRLLSFLVENGARTRTDSPSVIAGLFPGVLAAIPTQSAVVNLLQATGMALSDVASYKSILNMVSNEDSPVGELAVIKLELVASEVIKSTQKLVARVEELERDVTSGSVNPLGLYTYLTERLVAEMTKHGGDLFAREPKPGAVSLTERIGSLFRKARTREARATRTNASLARDLNAIEAAVHAAHDKFDAIEIKPADPSDTTNMDELAKSLDLSAVPTRVAKVIKKVESMVSDSIREYFLRGVQYSARAIAMDKTSGARFQVASAAVSNLERMLDSLPNFEKSLNSVVASAGIQGPPPAQISGSRKATLLGNLLRAGQNLTTDNALGAWAALLSEAHTEGHIERRELEAVIKEITSINDHAAKKASVEADMERFRVLSAAVDQATSDMYNSNPHALDTIIRGAEEMIRQAKVVEAHFDSGRISREAASRVGVRKREVETLANSARQRAAEISAARDEIYSRLQSLLLPLAGFVGLRAAPGVLEQLAKDAQRSTSEELRNLMHEAPKQVVSTVHSHLWSLFGQFREALEHPNSTTSSALAGVGPAFAIVVRSLLDPNKQRESVEFFITHADALADTVGAVEANPNSELAVAHAVNSIAAAIQTVSVGGRTITEFAFLVPMLERYQSRLTIVRETQRLATAQRAVAASVSAAAEVTTKLRAVAVPGVQEDVLKAAIAAAKHVSSEVTAAATAAERELARLDSKALSVAQVARAHQDLQKQTAVAKQRVGEIEEVLANLNKQQRELQDRAVHDRWKSDLLAALDKIETKSSFDVSELSRLRDLGAARGYDSREFAKRAEQALAANARAVIAVLDNVFKFNPYAPVNSKKETNPTISMLYNISWWDDFTLAAPILNTLFAGVDVEELMSLMRISTGMITFASTNGGRPKYNEAVNSLSSDMLKVPQLAKYVDFYGKWYTEFNAEMDVLSKLRADVLQAVGVRSGEISRALEEVTYVRNAEVAEKVLADGVKLYIPSDALIAKAVKYLEEFNQKRFAGSAFEEAIATTIRQDLSTAREAATQAEAARSEAMHRATHILREVVEAAKAADRDASANLANLKNLLRLTPPPQSVAAALDKATSSDDIVTQAALLLGTVESTPELDIKAVEWLQQARSIIDSHPLTTKIDGKGPMDPYAERIEKLHTLRGELDELRRQLTATEVSWDEAWGNFSRAVPRADVSMDGFVDAHQRARTLQASMGVISEMRADNKYGRLPPKVIGAIESKFAERHKNLETFNDTSTVLQTAITQFDSLVQQIPPEMEYDVLRSLLASFDQLAAVLPKWVGAEYAAYRSLLLMRIGLYDEYQKIAGIAAAGSRPHLEAVEYRSAVEDANLRRASRVSSLMGDKDVILSLREAKSSIDTAFPQVLLDAKGVPVEYRVCYRAVGDKLAAMLCGKLGVSMRPAMPSDPIVESSSVSGINVTHDILQLRFGLEKAYHSGFSTFARFVRHKRADWSPTEPAQAAAEIYAAVLATTLTREYGATWHRIRFMASSGLFVASPDSVCDTQGGRGKKSNNIVHLTLSDVVLSAMLRNSMHLVNFMRLDLTRQHEYMARTITPVLTKSLLSDILINTLVPTDTSTQWRSLPLAGDLEDLAQGMLFSIRMSDWKQNSFSTTSLLDVWMRSPGESGRAAAAKIASAIPGNPLATFTVLARMCIPPNALASLWEALQPEAFSQQNLSYDDVVTSRLDIASTVQTSVAVDPEMKSVDTKSRKQLYTTTGTSTTFTLAGSAPSAVKEVSALDVATCALMFGAPVVIAMETPEMFSEASGMSFCLKIFDSRPGATDHEIIQAVSSDLSSWGTSLLALDPNAIENACLTTQLEILSGLVASKLLAPAPPCLIVLDPSMRVIKVLWESESPPNDLVITLAEDEIIAELPYLNADDDLLPPMNPDDPIYTRVISGTNIPTATTEGSLFADQQLEFLRPESNPFPFASHDSSQSLDVPSSPSSGSDKYEEDPTGIVYDAPVDDMSDMAMNKAKAWQEWLEDGFAEDDYRELSNAMPAPPKTTPVVESKQKSDSVDRAPTLPPKAAPLPPSDASAIMSGKPVFKYTPGNKSAVPPSVPAPPTLPPAPPLPQSTSKAASGPPPTLPPAPPLPQSTSKAASGPPPTLPPAPPLPQSTSKAASGPPPTLPPAPPLPQSTSKAASGATQSDSGKTLTLDVPKTQSKDKVVPVPPTDKPSTTTPAALKQSDASKPPTAAIQHQQKLGTPVTPKDSGDKPTDNASAPVGVSPVTPDGTPGAKPPPKDAPPVDDTKQPVRKSLPSQVRGGRPYIRPSLGPFKFTGPPGYTIPVHGLPPSDSNVTQSTKEPPKPAVETPAAAPAKSAAAPAAAPAKSAAAPAAAPAKSAAAPAAAPAKSAAAPAAAPAKSAAAPAAAPAKDQTKSAAEVPKPAKDQAKDQAKDQAKDQAKDQAKDQAKSTTGQKLAKDPKSDGLTDDVALEIVPEKTPLPDDSPIGAVPENTPLPDDSPIGSPDLSASKNSHTTDAVSSDRFSVACKVPLPDSPEDDFYSYAVDVPLPDSPTDDPSSGRSDARAPTVGGVASIHRKSDSRNNRQSDAWRRAFADTLHGRPRNRSATKPCKSAPYKVPHAISYTKIPSVPNDQSGLAGKPCSEEPKRPTGRDTPVGSWNVSPSQAPADIPTAIPQNQNTSESPRTTSLKSPTRTVQSSMPADDIDELAEYDLQIARAVPVTKHPQPPPANQTPPPQEPPAPIDDRKNIRPPLSEEEIIAFLINMDDDDAGNASGPVDLHSVQAPKLPKQSKPTTNQFVPLDWWTETEPVVDADSLDLSPKQQRLFSWESTRDLLNINVRDRVYEEESDDEYTVSWDQHLVPAVSPTSVSSYSSDTVTDSYTDINDPRSVVCPLDGNAQNNVREFLDTHSSRVRVVPADELLSRRYFRSTSLSAMALLIAACRTIVRRLRATRRVLTDINRSLLLDLKQIRVLLG.

Residues 1–248 (MAQTLVPANK…SETYLSDEQY (248 aa)) form a deubiquitination activity region. The Peptidase C76 domain occupies 19–238 (VVIGYRNQYD…ISATSLLYGI (220 aa)). Residues cysteine 39, aspartate 172, and histidine 174 contribute to the active site. The tract at residues 311–351 (QPTEKRVSLPKRRRPPWTPPTSSENLTTSGNTHTVAGRPSQ) is disordered. The span at 332-344 (SSENLTTSGNTHT) shows a compositional bias: polar residues. The interval 482 to 508 (LEQFITMIFNRLLSFLVENGARTRTDS) is interaction with inner tegument protein. Disordered stretches follow at residues 2407–2442 (ESNP…PTGI) and 2479–3195 (SNAM…RKNI). Positions 2415-2432 (SHDSSQSLDVPSSPSSGS) are enriched in low complexity. Composition is skewed to pro residues over residues 2506–2516 (TLPPKAAPLPP), 2541–2556 (PSVP…PPLP), 2565–2577 (GPPP…PPLP), 2586–2598 (GPPP…PPLP), and 2607–2619 (GPPP…PPLP). Composition is skewed to polar residues over residues 2620–2637 (QSTS…SGKT) and 2778–2787 (SDSNVTQSTK). Residues 2797–2857 (PAAAPAKSAA…SAAAPAAAPA (61 aa)) are compositionally biased toward low complexity. Basic and acidic residues predominate over residues 2869-2895 (KPAKDQAKDQAKDQAKDQAKDQAKDQA). Residues 2953-2969 (LSASKNSHTTDAVSSDR) are compositionally biased toward polar residues. Basic and acidic residues-rich tracts occupy residues 3023–3040 (RKSD…RRAF) and 3088–3097 (CSEEPKRPTG). Residues 3120-3146 (IPQNQNTSESPRTTSLKSPTRTVQSSM) show a composition bias toward polar residues. Positions 3171-3188 (PQPPPANQTPPPQEPPAP) are enriched in pro residues.

It belongs to the herpesviridae large tegument protein family. As to quaternary structure, interacts with host CUL1 and CUL4A; these interactions inhibit the E3 ligase activity of cullins. Interacts with inner tegument protein. Interacts with capsid vertex specific component CVC2. Interacts with the major capsid protein/MCP.

Its subcellular location is the virion tegument. It is found in the host cytoplasm. The protein resides in the host nucleus. It carries out the reaction Thiol-dependent hydrolysis of ester, thioester, amide, peptide and isopeptide bonds formed by the C-terminal Gly of ubiquitin (a 76-residue protein attached to proteins as an intracellular targeting signal).. In terms of biological role, large tegument protein that plays multiple roles in the viral cycle. During viral entry, remains associated with the capsid while most of the tegument is detached and participates in the capsid transport toward the host nucleus. Plays a role in the routing of the capsid at the nuclear pore complex and subsequent uncoating. Within the host nucleus, acts as a deneddylase and promotes the degradation of nuclear CRLs (cullin-RING ubiquitin ligases) and thereby stabilizes nuclear CRL substrates, while cytoplasmic CRLs remain unaffected. These modifications prevent host cell cycle S-phase progression and create a favorable environment allowing efficient viral genome replication. Participates later in the secondary envelopment of capsids. Indeed, plays a linker role for the association of the outer viral tegument to the capsids together with the inner tegument protein. The chain is Large tegument protein deneddylase from Equus caballus (Horse).